Here is a 319-residue protein sequence, read N- to C-terminus: Ribonuclease Z (319 aa).

Zn(2+) contacts are provided by His-62, His-64, Asp-66, His-67, His-139, Asp-210, and His-268. Asp-66 (proton acceptor) is an active-site residue.

The protein belongs to the RNase Z family. As to quaternary structure, homodimer. The cofactor is Zn(2+).

It catalyses the reaction Endonucleolytic cleavage of RNA, removing extra 3' nucleotides from tRNA precursor, generating 3' termini of tRNAs. A 3'-hydroxy group is left at the tRNA terminus and a 5'-phosphoryl group is left at the trailer molecule.. Zinc phosphodiesterase, which displays some tRNA 3'-processing endonuclease activity. Probably involved in tRNA maturation, by removing a 3'-trailer from precursor tRNA. The sequence is that of Ribonuclease Z from Nostoc punctiforme (strain ATCC 29133 / PCC 73102).